A 72-amino-acid polypeptide reads, in one-letter code: Translation initiation factor IF-1 (72 aa).

The 72-residue stretch at 1-72 (MAKDDVIEID…DKGRITFRYK (72 aa)) folds into the S1-like domain.

The protein belongs to the IF-1 family. As to quaternary structure, component of the 30S ribosomal translation pre-initiation complex which assembles on the 30S ribosome in the order IF-2 and IF-3, IF-1 and N-formylmethionyl-tRNA(fMet); mRNA recruitment can occur at any time during PIC assembly.

The protein resides in the cytoplasm. Its function is as follows. One of the essential components for the initiation of protein synthesis. Stabilizes the binding of IF-2 and IF-3 on the 30S subunit to which N-formylmethionyl-tRNA(fMet) subsequently binds. Helps modulate mRNA selection, yielding the 30S pre-initiation complex (PIC). Upon addition of the 50S ribosomal subunit IF-1, IF-2 and IF-3 are released leaving the mature 70S translation initiation complex. This chain is Translation initiation factor IF-1, found in Campylobacter jejuni subsp. doylei (strain ATCC BAA-1458 / RM4099 / 269.97).